Here is an 88-residue protein sequence, read N- to C-terminus: MANHKSAKKRILRNASRSEINHARIGRIRTFVKKVEAAIASGDKDAAKAAFQIAMPEVQRGVTKGVLHQNTASRKISRLSARIKAIGA.

It belongs to the bacterial ribosomal protein bS20 family.

In terms of biological role, binds directly to 16S ribosomal RNA. This is Small ribosomal subunit protein bS20 from Rhodospirillum rubrum (strain ATCC 11170 / ATH 1.1.1 / DSM 467 / LMG 4362 / NCIMB 8255 / S1).